Here is a 918-residue protein sequence, read N- to C-terminus: UPF0182 protein CPR_0011 (918 aa).

7 helical membrane-spanning segments follow: residues 8–28 (TVLI…NFII), 46–66 (LIAI…VIAI), 91–111 (FLLS…TTQW), 151–171 (AISL…ALGF), 200–220 (LAVL…LKSY), 243–263 (IFYK…FISI), and 271–291 (IIIS…VAIF).

It belongs to the UPF0182 family.

It is found in the cell membrane. The polypeptide is UPF0182 protein CPR_0011 (Clostridium perfringens (strain SM101 / Type A)).